The sequence spans 174 residues: RNA pyrophosphohydrolase (174 aa).

The region spanning Gly-6–Gln-145 is the Nudix hydrolase domain. The Nudix box signature appears at Gly-38–Gly-59.

It belongs to the Nudix hydrolase family. RppH subfamily. Requires a divalent metal cation as cofactor.

Functionally, accelerates the degradation of transcripts by removing pyrophosphate from the 5'-end of triphosphorylated RNA, leading to a more labile monophosphorylated state that can stimulate subsequent ribonuclease cleavage. The chain is RNA pyrophosphohydrolase from Acidithiobacillus ferrooxidans (strain ATCC 53993 / BNL-5-31) (Leptospirillum ferrooxidans (ATCC 53993)).